Reading from the N-terminus, the 448-residue chain is Probable glycine dehydrogenase (decarboxylating) subunit 1 (448 aa).

It belongs to the GcvP family. N-terminal subunit subfamily. The glycine cleavage system is composed of four proteins: P, T, L and H. In this organism, the P 'protein' is a heterodimer of two subunits.

The catalysed reaction is N(6)-[(R)-lipoyl]-L-lysyl-[glycine-cleavage complex H protein] + glycine + H(+) = N(6)-[(R)-S(8)-aminomethyldihydrolipoyl]-L-lysyl-[glycine-cleavage complex H protein] + CO2. Functionally, the glycine cleavage system catalyzes the degradation of glycine. The P protein binds the alpha-amino group of glycine through its pyridoxal phosphate cofactor; CO(2) is released and the remaining methylamine moiety is then transferred to the lipoamide cofactor of the H protein. The chain is Probable glycine dehydrogenase (decarboxylating) subunit 1 from Listeria welshimeri serovar 6b (strain ATCC 35897 / DSM 20650 / CCUG 15529 / CIP 8149 / NCTC 11857 / SLCC 5334 / V8).